A 290-amino-acid polypeptide reads, in one-letter code: Phosphate import ATP-binding protein PstB (290 aa).

Positions Met43–Ile285 constitute an ABC transporter domain. ATP is bound at residue Gly75 to Ser82.

It belongs to the ABC transporter superfamily. Phosphate importer (TC 3.A.1.7) family. The complex is composed of two ATP-binding proteins (PstB), two transmembrane proteins (PstC and PstA) and a solute-binding protein (PstS).

It localises to the cell inner membrane. It carries out the reaction phosphate(out) + ATP + H2O = ADP + 2 phosphate(in) + H(+). Its function is as follows. Part of the ABC transporter complex PstSACB involved in phosphate import. Responsible for energy coupling to the transport system. The chain is Phosphate import ATP-binding protein PstB from Pseudoalteromonas atlantica (strain T6c / ATCC BAA-1087).